The following is a 475-amino-acid chain: Ribulose bisphosphate carboxylase large chain (475 aa).

A propeptide spanning residues 1 to 2 is cleaved from the precursor; sequence MS. Pro-3 carries the N-acetylproline modification. Position 14 is an N6,N6,N6-trimethyllysine (Lys-14). Asn-123 and Thr-173 together coordinate substrate. The active-site Proton acceptor is Lys-175. Position 177 (Lys-177) interacts with substrate. Lys-201, Asp-203, and Glu-204 together coordinate Mg(2+). Residue Lys-201 is modified to N6-carboxylysine. His-294 (proton acceptor) is an active-site residue. Positions 295, 327, and 379 each coordinate substrate.

It belongs to the RuBisCO large chain family. Type I subfamily. Heterohexadecamer of 8 large chains and 8 small chains; disulfide-linked. The disulfide link is formed within the large subunit homodimers. Requires Mg(2+) as cofactor. Post-translationally, the disulfide bond which can form in the large chain dimeric partners within the hexadecamer appears to be associated with oxidative stress and protein turnover.

Its subcellular location is the plastid. It is found in the chloroplast. It catalyses the reaction 2 (2R)-3-phosphoglycerate + 2 H(+) = D-ribulose 1,5-bisphosphate + CO2 + H2O. The enzyme catalyses D-ribulose 1,5-bisphosphate + O2 = 2-phosphoglycolate + (2R)-3-phosphoglycerate + 2 H(+). In terms of biological role, ruBisCO catalyzes two reactions: the carboxylation of D-ribulose 1,5-bisphosphate, the primary event in carbon dioxide fixation, as well as the oxidative fragmentation of the pentose substrate in the photorespiration process. Both reactions occur simultaneously and in competition at the same active site. The sequence is that of Ribulose bisphosphate carboxylase large chain from Picea abies (Norway spruce).